The sequence spans 554 residues: Arginine--tRNA ligase (554 aa).

The short motif at 129 to 139 is the 'HIGH' region element; the sequence is ANPTGPLHIGH.

The protein belongs to the class-I aminoacyl-tRNA synthetase family. In terms of assembly, monomer.

The protein localises to the cytoplasm. It catalyses the reaction tRNA(Arg) + L-arginine + ATP = L-arginyl-tRNA(Arg) + AMP + diphosphate. The sequence is that of Arginine--tRNA ligase from Citrifermentans bemidjiense (strain ATCC BAA-1014 / DSM 16622 / JCM 12645 / Bem) (Geobacter bemidjiensis).